We begin with the raw amino-acid sequence, 404 residues long: Probable tRNA sulfurtransferase (404 aa).

The 106-residue stretch at 61–166 (EAVSERLKDV…SGYSYIMCDE (106 aa)) folds into the THUMP domain. ATP-binding positions include 184–185 (LL), 209–210 (HF), arginine 266, glycine 288, and glutamine 297.

This sequence belongs to the ThiI family.

The protein resides in the cytoplasm. It catalyses the reaction [ThiI sulfur-carrier protein]-S-sulfanyl-L-cysteine + a uridine in tRNA + 2 reduced [2Fe-2S]-[ferredoxin] + ATP + H(+) = [ThiI sulfur-carrier protein]-L-cysteine + a 4-thiouridine in tRNA + 2 oxidized [2Fe-2S]-[ferredoxin] + AMP + diphosphate. The catalysed reaction is [ThiS sulfur-carrier protein]-C-terminal Gly-Gly-AMP + S-sulfanyl-L-cysteinyl-[cysteine desulfurase] + AH2 = [ThiS sulfur-carrier protein]-C-terminal-Gly-aminoethanethioate + L-cysteinyl-[cysteine desulfurase] + A + AMP + 2 H(+). It functions in the pathway cofactor biosynthesis; thiamine diphosphate biosynthesis. Catalyzes the ATP-dependent transfer of a sulfur to tRNA to produce 4-thiouridine in position 8 of tRNAs, which functions as a near-UV photosensor. Also catalyzes the transfer of sulfur to the sulfur carrier protein ThiS, forming ThiS-thiocarboxylate. This is a step in the synthesis of thiazole, in the thiamine biosynthesis pathway. The sulfur is donated as persulfide by IscS. The sequence is that of Probable tRNA sulfurtransferase from Bacillus cereus (strain B4264).